The primary structure comprises 206 residues: Large ribosomal subunit protein bL25 (206 aa).

A bL25 domain region spans residues 1 to 91 (MEYRLKAYYR…RPEHVDFFVL (91 aa)). The CTC domain stretch occupies residues 92–206 (SDEPVEMYVP…IKKGKEEEEE (115 aa)). The tract at residues 184-206 (AEEAAAEVAEPEVIKKGKEEEEE) is disordered. Residues 195–206 (EVIKKGKEEEEE) are compositionally biased toward basic and acidic residues.

This sequence belongs to the bacterial ribosomal protein bL25 family. CTC subfamily. As to quaternary structure, part of the 50S ribosomal subunit. Contacts the 5S rRNA.

Its function is as follows. This is one of 3 proteins that mediate the attachment of the 5S rRNA onto the large ribosomal subunit. This is Large ribosomal subunit protein bL25 (rplY) from Thermus thermophilus.